The chain runs to 237 residues: Ribonuclease PH (237 aa).

Residues arginine 86 and 124-126 each bind phosphate; that span reads GTR.

This sequence belongs to the RNase PH family. In terms of assembly, homohexameric ring arranged as a trimer of dimers.

The catalysed reaction is tRNA(n+1) + phosphate = tRNA(n) + a ribonucleoside 5'-diphosphate. Functionally, phosphorolytic 3'-5' exoribonuclease that plays an important role in tRNA 3'-end maturation. Removes nucleotide residues following the 3'-CCA terminus of tRNAs; can also add nucleotides to the ends of RNA molecules by using nucleoside diphosphates as substrates, but this may not be physiologically important. Probably plays a role in initiation of 16S rRNA degradation (leading to ribosome degradation) during starvation. The sequence is that of Ribonuclease PH from Shewanella piezotolerans (strain WP3 / JCM 13877).